We begin with the raw amino-acid sequence, 556 residues long: Riboflavin biosynthesis protein RibBA (556 aa).

Residues 1–202 form a DHBP synthase region; it reads MFDAIDAALA…IADLISYRLQ (202 aa). Residues 26-27, D31, 141-145, and E165 contribute to the D-ribulose 5-phosphate site; these read RE and RAGHT. A Mg(2+)-binding site is contributed by E27. Residue H144 coordinates Mg(2+). The segment at 203-402 is GTP cyclohydrolase II; that stretch reads HDRFVQRETI…AEKLGHWLVK (200 aa). GTP is bound at residue 255–259; that stretch reads RMHSE. Zn(2+) contacts are provided by C260, C271, and C273. GTP-binding positions include Q276, 298 to 300, and T320; that span reads EGR. Residue D332 is the Proton acceptor; for GTP cyclohydrolase activity of the active site. R334 functions as the Nucleophile; for GTP cyclohydrolase activity in the catalytic mechanism. T355 and K360 together coordinate GTP. The unknown stretch occupies residues 403–556; that stretch reads NYLLAIAIKF…KQGSGEMTNR (154 aa).

This sequence in the N-terminal section; belongs to the DHBP synthase family. The protein in the central section; belongs to the GTP cyclohydrolase II family. The cofactor is Mg(2+). It depends on Mn(2+) as a cofactor. Requires Zn(2+) as cofactor.

The catalysed reaction is D-ribulose 5-phosphate = (2S)-2-hydroxy-3-oxobutyl phosphate + formate + H(+). The enzyme catalyses GTP + 4 H2O = 2,5-diamino-6-hydroxy-4-(5-phosphoribosylamino)-pyrimidine + formate + 2 phosphate + 3 H(+). It functions in the pathway cofactor biosynthesis; riboflavin biosynthesis; 2-hydroxy-3-oxobutyl phosphate from D-ribulose 5-phosphate: step 1/1. It participates in cofactor biosynthesis; riboflavin biosynthesis; 5-amino-6-(D-ribitylamino)uracil from GTP: step 1/4. Its function is as follows. Catalyzes the conversion of D-ribulose 5-phosphate to formate and 3,4-dihydroxy-2-butanone 4-phosphate. Functionally, catalyzes the conversion of GTP to 2,5-diamino-6-ribosylamino-4(3H)-pyrimidinone 5'-phosphate (DARP), formate and pyrophosphate. This Synechocystis sp. (strain ATCC 27184 / PCC 6803 / Kazusa) protein is Riboflavin biosynthesis protein RibBA (ribBA).